A 1220-amino-acid chain; its full sequence is DNA-directed RNA polymerase subunit beta' (1220 aa).

Zn(2+)-binding residues include C60, C62, C75, and C78. Mg(2+) contacts are provided by D449, D451, and D453. Zn(2+) contacts are provided by C818, C892, C899, and C902.

The protein belongs to the RNA polymerase beta' chain family. The RNAP catalytic core consists of 2 alpha, 1 beta, 1 beta' and 1 omega subunit. When a sigma factor is associated with the core the holoenzyme is formed, which can initiate transcription. It depends on Mg(2+) as a cofactor. Requires Zn(2+) as cofactor.

It catalyses the reaction RNA(n) + a ribonucleoside 5'-triphosphate = RNA(n+1) + diphosphate. Functionally, DNA-dependent RNA polymerase catalyzes the transcription of DNA into RNA using the four ribonucleoside triphosphates as substrates. The sequence is that of DNA-directed RNA polymerase subunit beta' from Lacticaseibacillus paracasei (strain ATCC 334 / BCRC 17002 / CCUG 31169 / CIP 107868 / KCTC 3260 / NRRL B-441) (Lactobacillus paracasei).